The sequence spans 138 residues: Histone H2B.4 (138 aa).

The segment covering 1 to 39 (MAPKAAEKKPAEKKPAGKAPAEKLPKAEKKISKDAGGSE) has biased composition (basic and acidic residues). A disordered region spans residues 1–48 (MAPKAAEKKPAEKKPAGKAPAEKLPKAEKKISKDAGGSEKKKKKSKKS). Ala2 carries the n,N,N-trimethylalanine; alternate modification. Ala2 bears the N,N-dimethylalanine; alternate mark. At Ala2 the chain carries N-methylalanine; alternate. The residue at position 4 (Lys4) is an N6-methyllysine. Lys8 and Lys13 each carry N6-acetyllysine. Lys14 is subject to N6,N6-dimethyllysine. 4 positions are modified to N6-acetyllysine: Lys18, Lys23, Lys29, and Lys30. Residue Lys135 forms a Glycyl lysine isopeptide (Lys-Gly) (interchain with G-Cter in ubiquitin) linkage.

Belongs to the histone H2B family. The nucleosome is a histone octamer containing two molecules each of H2A, H2B, H3 and H4 assembled in one H3-H4 heterotetramer and two H2A-H2B heterodimers. The octamer wraps approximately 147 bp of DNA. Post-translationally, can be acetylated to form H2BK6ac, H2BK33ac and H2BK34ac. Monoubiquitinated by BRE1 to form H2BK143ub1 and deubiquitinated by UBP26. Required for heterochromatic histone H3 di- and trimethylation at H3K4me. May give a specific tag for epigenetic transcriptional activation.

It is found in the nucleus. It localises to the chromosome. In terms of biological role, core component of nucleosome. Nucleosomes wrap and compact DNA into chromatin, limiting DNA accessibility to the cellular machineries which require DNA as a template. Histones thereby play a central role in transcription regulation, DNA repair, DNA replication and chromosomal stability. DNA accessibility is regulated via a complex set of post-translational modifications of histones, also called histone code, and nucleosome remodeling. In Arabidopsis thaliana (Mouse-ear cress), this protein is Histone H2B.4.